We begin with the raw amino-acid sequence, 424 residues long: MAKLTGMFSAAILLSMAICSTAIIYRGEHMSMYLNASSEFAVYPTDQSLVLVGHLLFLDGQRLPTTNYSGLIELIHYNYSSVCYTVIQTISYESCPRVANNAFRSCLHKTSKHYHDYFRVNASVETNVLLNITKPQPTDSGAYILRVKLDHAPTADVFGVSAFVYDLKSKTVPDPMPTTQTVEPTTSYVSTPTYDYTDDVTTETESTSTSTQQAMTSTQTPSATWGTQLTTELPTNETVVIGQEALLCHWFQPSTRVPTLYLHLLGRTGNLPEDVLLVEDSEFLRTTSPAHRPSASPADGDDFKQTNSTSLKARNKIVAMVVIPTACVLMLLLVVVGAIINGAVRKHLLSCASRRIYRSGQGGASAAERRRLTCGPTLAASSESLADDTTSSPPTPKPSKKTKLETDPLMEQLNRKLEAIKEES.

An N-terminal signal peptide occupies residues 1–22 (MAKLTGMFSAAILLSMAICSTA). Topologically, residues 23–319 (IIYRGEHMSM…SLKARNKIVA (297 aa)) are virion surface. 5 N-linked (GlcNAc...) asparagine; by host glycosylation sites follow: N35, N67, N78, N121, and N131. Positions 192–223 (PTYDYTDDVTTETESTSTSTQQAMTSTQTPSA) are disordered. The segment covering 203-223 (ETESTSTSTQQAMTSTQTPSA) has biased composition (low complexity). N-linked (GlcNAc...) asparagine; by host glycosylation is present at N236. The disordered stretch occupies residues 287–306 (TSPAHRPSASPADGDDFKQT). N-linked (GlcNAc...) asparagine; by host glycosylation occurs at N307. The chain crosses the membrane as a helical span at residues 320-340 (MVVIPTACVLMLLLVVVGAII). The Intravirion portion of the chain corresponds to 341-424 (NGAVRKHLLS…RKLEAIKEES (84 aa)). The segment at 377-408 (TLAASSESLADDTTSSPPTPKPSKKTKLETDP) is disordered. Residues 379 to 388 (AASSESLADD) are compositionally biased toward polar residues.

The protein belongs to the alphaherpesvirinae glycoprotein I family. Interacts with gE.

Its subcellular location is the virion membrane. The protein resides in the host cell membrane. It is found in the host cell junction. It localises to the host Golgi apparatus membrane. Functionally, in epithelial cells, the heterodimer gE/gI is required for the cell-to-cell spread of the virus, by sorting nascent virions to cell junctions. Once the virus reaches the cell junctions, virus particles can spread to adjacent cells extremely rapidly through interactions with cellular receptors that accumulate at these junctions. Implicated in basolateral spread in polarized cells. In neuronal cells, gE/gI is essential for the anterograde spread of the infection throughout the host nervous system. Together with US9, the heterodimer gE/gI is involved in the sorting and transport of viral structural components toward axon tips. The sequence is that of Envelope glycoprotein I (gI) from Equine herpesvirus 1 (strain AB1) (EHV-1).